We begin with the raw amino-acid sequence, 457 residues long: Pancreatic triacylglycerol lipase (457 aa).

Residues 1–7 (LLLGAVA) form the signal peptide. 2 disulfide bridges follow: Cys-12-Cys-18 and Cys-99-Cys-110. Ser-161 (nucleophile) is an active-site residue. Asp-185 functions as the Charge relay system in the catalytic mechanism. Positions 196, 199, 201, and 204 each coordinate Ca(2+). Cys-246 and Cys-270 are joined by a disulfide. The active-site Charge relay system is the His-272. 2 cysteine pairs are disulfide-bonded: Cys-294-Cys-305 and Cys-308-Cys-313. Asn-343 carries N-linked (GlcNAc...) asparagine glycosylation. The 111-residue stretch at 347-457 (WRYQIAVTLS…EDILLTLTPC (111 aa)) folds into the PLAT domain. Residues Cys-441 and Cys-457 are joined by a disulfide bond.

It belongs to the AB hydrolase superfamily. Lipase family. As to quaternary structure, forms a 1:1 stoichiometric complex with (pro)colipase/CLPS.

The protein resides in the secreted. The enzyme catalyses a triacylglycerol + H2O = a diacylglycerol + a fatty acid + H(+). It catalyses the reaction 1,2,3-tributanoylglycerol + H2O = dibutanoylglycerol + butanoate + H(+). It carries out the reaction 1,2,3-tri-(9Z-octadecenoyl)-glycerol + H2O = di-(9Z)-octadecenoylglycerol + (9Z)-octadecenoate + H(+). The catalysed reaction is all-trans-retinyl hexadecanoate + H2O = all-trans-retinol + hexadecanoate + H(+). The enzyme catalyses 1,2-di-(9Z-octadecenoyl)-glycerol + H2O = (9Z-octadecenoyl)-glycerol + (9Z)-octadecenoate + H(+). Inhibited by bile salts, is reactivated by (pro)colipase/CLPS. In terms of biological role, plays an important role in fat metabolism. It preferentially splits the esters of long-chain fatty acids at positions 1 and 3, producing mainly 2-monoacylglycerol and free fatty acids, and shows considerably higher activity against insoluble emulsified substrates than against soluble ones. In Myocastor coypus (Coypu), this protein is Pancreatic triacylglycerol lipase (PNLIP).